Consider the following 279-residue polypeptide: Four and a half LIM domains protein 2 (279 aa).

The C4-type zinc-finger motif lies at 7–31; the sequence is CHHCNESLYGKKYILKEENPHCVAC. LIM zinc-binding domains lie at 40–92, 101–153, and 162–212; these read CEEC…CTDC, CQEC…CVPC, and CVQC…CLTC. Lys-78 is covalently cross-linked (Glycyl lysine isopeptide (Lys-Gly) (interchain with G-Cter in SUMO2)). Residues Lys-167 and Lys-220 each participate in a glycyl lysine isopeptide (Lys-Gly) (interchain with G-Cter in SUMO2) cross-link. Residues 221–275 enclose the LIM zinc-binding 4 domain; the sequence is CAGCTNPISGLGGTKYISFEERQWHNDCFNCKKCSLSLVGRGFLTERDDILCPDC. A Phosphoserine modification is found at Ser-238.

Interacts with ZNF638 and TTN/titin. Interacts with E4F1. Interacts with GRB7. Interacts with SIRT1 and FOXO1. Interacts with CEFIP and calcineurin. Interacts with FOXK1. Expressed in heart only (at protein level).

The protein resides in the cytoplasm. Its subcellular location is the nucleus. It is found in the myofibril. It localises to the sarcomere. The protein localises to the z line. May function as a molecular transmitter linking various signaling pathways to transcriptional regulation. Negatively regulates the transcriptional repressor E4F1 and may function in cell growth. Inhibits the transcriptional activity of FOXO1 and its apoptotic function by enhancing the interaction of FOXO1 with SIRT1 and FOXO1 deacetylation. Negatively regulates the calcineurin/NFAT signaling pathway in cardiomyocytes. The polypeptide is Four and a half LIM domains protein 2 (Fhl2) (Rattus norvegicus (Rat)).